The chain runs to 309 residues: Homoserine kinase (309 aa).

91-101 (PIGSGLGSSAC) serves as a coordination point for ATP.

The protein belongs to the GHMP kinase family. Homoserine kinase subfamily.

Its subcellular location is the cytoplasm. It catalyses the reaction L-homoserine + ATP = O-phospho-L-homoserine + ADP + H(+). It participates in amino-acid biosynthesis; L-threonine biosynthesis; L-threonine from L-aspartate: step 4/5. Functionally, catalyzes the ATP-dependent phosphorylation of L-homoserine to L-homoserine phosphate. The protein is Homoserine kinase of Erwinia tasmaniensis (strain DSM 17950 / CFBP 7177 / CIP 109463 / NCPPB 4357 / Et1/99).